Here is a 300-residue protein sequence, read N- to C-terminus: Nucleotide-binding protein Daci_5422 (300 aa).

An ATP-binding site is contributed by Gly10–Ser17. Residue Asp59–Ser62 coordinates GTP.

This sequence belongs to the RapZ-like family.

Functionally, displays ATPase and GTPase activities. The chain is Nucleotide-binding protein Daci_5422 from Delftia acidovorans (strain DSM 14801 / SPH-1).